Consider the following 403-residue polypeptide: Nucleolar protein 13 (403 aa).

Composition is skewed to basic and acidic residues over residues 1-35 (MSETELSKEDAVTKKDNEEQVKKALLDPTKKRKAE) and 75-97 (KSIEEYKEDAEKKKSGASEKDAQ). 2 disordered regions span residues 1-43 (MSET…IDLK) and 72-116 (IDPK…EVVK). An N-acetylserine modification is found at Ser2. Phosphoserine is present on Ser2. The segment covering 99-108 (EESTINTPTG) has biased composition (polar residues). Phosphothreonine is present on Thr105. 2 RRM domains span residues 125–219 (YGVW…DSEN) and 239–317 (RILF…YGED). Over residues 313–329 (EYGEDRSKRQVRKKVEN) the composition is skewed to basic and acidic residues. The tract at residues 313–403 (EYGEDRSKRQ…PSQGKKVKFD (91 aa)) is disordered. The segment covering 330-344 (VSRNNSSSFDISNNK) has biased composition (polar residues). Ser335 is subject to Phosphoserine. Positions 345-361 (GYDRAGQDNGSKPEYKR) are enriched in basic and acidic residues. Positions 371–381 (DSNNRTKSSVA) are enriched in polar residues.

The protein resides in the nucleus. It localises to the nucleolus. This Saccharomyces cerevisiae (strain ATCC 204508 / S288c) (Baker's yeast) protein is Nucleolar protein 13 (NOP13).